The primary structure comprises 885 residues: Translation initiation factor IF-2 (885 aa).

Over residues 123 to 232 (ETEAKAKAEA…EAERYSDHHI (110 aa)) the composition is skewed to basic and acidic residues. The segment at 123–289 (ETEAKAKAEA…RNRSTAPESM (167 aa)) is disordered. The span at 253-266 (GRRARNKNTAKTKR) shows a compositional bias: basic residues. Residues 267–276 (GGKDARDGRE) are compositionally biased toward basic and acidic residues. A tr-type G domain is found at 385–554 (PRAPVVTIMG…LLQAEVLELK (170 aa)). The G1 stretch occupies residues 394-401 (GHVDHGKT). 394–401 (GHVDHGKT) serves as a coordination point for GTP. A G2 region spans residues 419 to 423 (GITQH). The segment at 440-443 (DTPG) is G3. Residues 440-444 (DTPGH) and 494-497 (NKMD) each bind GTP. Residues 494 to 497 (NKMD) form a G4 region. The interval 530–532 (SAK) is G5.

The protein belongs to the TRAFAC class translation factor GTPase superfamily. Classic translation factor GTPase family. IF-2 subfamily.

Its subcellular location is the cytoplasm. Its function is as follows. One of the essential components for the initiation of protein synthesis. Protects formylmethionyl-tRNA from spontaneous hydrolysis and promotes its binding to the 30S ribosomal subunits. Also involved in the hydrolysis of GTP during the formation of the 70S ribosomal complex. This is Translation initiation factor IF-2 from Shewanella oneidensis (strain ATCC 700550 / JCM 31522 / CIP 106686 / LMG 19005 / NCIMB 14063 / MR-1).